A 57-amino-acid polypeptide reads, in one-letter code: Protein translocase subunit SecE (57 aa).

Residues 33–53 (GAGIFLVGLLGFIIFAVMSFL) traverse the membrane as a helical segment.

The protein belongs to the SecE/SEC61-gamma family. Component of the Sec protein translocase complex. Heterotrimer consisting of SecY (alpha), SecG (beta) and SecE (gamma) subunits. The heterotrimers can form oligomers, although 1 heterotrimer is thought to be able to translocate proteins. Interacts with the ribosome. May interact with SecDF, and other proteins may be involved.

The protein resides in the cell membrane. Functionally, essential subunit of the Sec protein translocation channel SecYEG. Clamps together the 2 halves of SecY. May contact the channel plug during translocation. This is Protein translocase subunit SecE from Haloferax mediterranei (strain ATCC 33500 / DSM 1411 / JCM 8866 / NBRC 14739 / NCIMB 2177 / R-4) (Halobacterium mediterranei).